The following is a 177-amino-acid chain: Large ribosomal subunit protein uL6 (177 aa).

It belongs to the universal ribosomal protein uL6 family. In terms of assembly, part of the 50S ribosomal subunit.

Functionally, this protein binds to the 23S rRNA, and is important in its secondary structure. It is located near the subunit interface in the base of the L7/L12 stalk, and near the tRNA binding site of the peptidyltransferase center. The sequence is that of Large ribosomal subunit protein uL6 from Idiomarina loihiensis (strain ATCC BAA-735 / DSM 15497 / L2-TR).